Reading from the N-terminus, the 390-residue chain is Putative 2-isopropylmalate synthase (390 aa).

One can recognise a Pyruvate carboxyltransferase domain in the interval 5–267; it reads IIIFDTTLRD…KTNIKYQEIY (263 aa). Mn(2+) is bound by residues Asp-14, His-202, His-204, and Asn-238.

This sequence belongs to the alpha-IPM synthase/homocitrate synthase family. LeuA type 1 subfamily. As to quaternary structure, homodimer. Mn(2+) is required as a cofactor.

The protein resides in the cytoplasm. The catalysed reaction is 3-methyl-2-oxobutanoate + acetyl-CoA + H2O = (2S)-2-isopropylmalate + CoA + H(+). Its pathway is amino-acid biosynthesis; L-leucine biosynthesis; L-leucine from 3-methyl-2-oxobutanoate: step 1/4. Its function is as follows. Catalyzes the condensation of the acetyl group of acetyl-CoA with 3-methyl-2-oxobutanoate (2-ketoisovalerate) to form 3-carboxy-3-hydroxy-4-methylpentanoate (2-isopropylmalate). This is Putative 2-isopropylmalate synthase from Buchnera aphidicola subsp. Baizongia pistaciae (strain Bp).